The sequence spans 453 residues: Serine/threonine-protein phosphatase 2A regulatory subunit B'' subunit gamma (453 aa).

EF-hand domains follow at residues 273–308 and 341–376; these read PSAL…TMTN and KEPA…IQEL. The Ca(2+) site is built by aspartate 286, aspartate 288, asparagine 290, methionine 292, and glutamate 297.

In terms of assembly, interacts with MCM3AP/GANP. Interacts with PPP5C, and the phosphatase 2A core enzyme composed of the PPP2CA catalytic subunit and the constant regulatory subunit PPP2R1A. Finds in a complex with ABCB1, TFPI2 and PPP2R3C; leading to the dephosphorylation of ABCB1. In terms of tissue distribution, ubiquitously expressed in brain and other tissues.

Its subcellular location is the nucleus. The protein localises to the cytoplasm. Functionally, may regulate MCM3AP phosphorylation through phosphatase recruitment. May act as a negative regulator of ABCB1 expression and function through the dephosphorylation of ABCB1 by TFPI2/PPP2R3C complex. May play a role in the activation-induced cell death of B-cells. The sequence is that of Serine/threonine-protein phosphatase 2A regulatory subunit B'' subunit gamma (PPP2R3C) from Homo sapiens (Human).